The following is a 719-amino-acid chain: Phosphoribosylformylglycinamidine synthase subunit PurL (719 aa).

His-47 is a catalytic residue. Tyr-50 and Lys-89 together coordinate ATP. Glu-91 serves as a coordination point for Mg(2+). Residues 92–95 (SHNH) and Arg-114 each bind substrate. The Proton acceptor role is filled by His-93. Asp-115 serves as a coordination point for Mg(2+). A substrate-binding site is contributed by Gln-238. Asp-266 contributes to the Mg(2+) binding site. 310 to 312 (ESQ) provides a ligand contact to substrate. Asp-488 and Gly-525 together coordinate ATP. Asn-526 is a Mg(2+) binding site. Ser-528 lines the substrate pocket.

This sequence belongs to the FGAMS family. As to quaternary structure, monomer. Part of the FGAM synthase complex composed of 1 PurL, 1 PurQ and 2 PurS subunits.

Its subcellular location is the cytoplasm. It catalyses the reaction N(2)-formyl-N(1)-(5-phospho-beta-D-ribosyl)glycinamide + L-glutamine + ATP + H2O = 2-formamido-N(1)-(5-O-phospho-beta-D-ribosyl)acetamidine + L-glutamate + ADP + phosphate + H(+). The protein operates within purine metabolism; IMP biosynthesis via de novo pathway; 5-amino-1-(5-phospho-D-ribosyl)imidazole from N(2)-formyl-N(1)-(5-phospho-D-ribosyl)glycinamide: step 1/2. Functionally, part of the phosphoribosylformylglycinamidine synthase complex involved in the purines biosynthetic pathway. Catalyzes the ATP-dependent conversion of formylglycinamide ribonucleotide (FGAR) and glutamine to yield formylglycinamidine ribonucleotide (FGAM) and glutamate. The FGAM synthase complex is composed of three subunits. PurQ produces an ammonia molecule by converting glutamine to glutamate. PurL transfers the ammonia molecule to FGAR to form FGAM in an ATP-dependent manner. PurS interacts with PurQ and PurL and is thought to assist in the transfer of the ammonia molecule from PurQ to PurL. This is Phosphoribosylformylglycinamidine synthase subunit PurL from Cereibacter sphaeroides (strain ATCC 17025 / ATH 2.4.3) (Rhodobacter sphaeroides).